The chain runs to 325 residues: Inactive S-adenosylmethionine decarboxylase prozyme (325 aa).

This sequence belongs to the eukaryotic AdoMetDC family. In terms of assembly, forms a heterodimer with S-adenosylmethionine decarboxylase AdoMetDC; heterodimerization is required to activate AdoMetDC.

It functions in the pathway amine and polyamine biosynthesis; S-adenosylmethioninamine biosynthesis; S-adenosylmethioninamine from S-adenosyl-L-methionine: step 1/1. Its function is as follows. Probably has no catalytic activity due to the loss of several residues required for processing and catalysis. Forms a complex with S-adenosylmethionine decarboxylase AdoMetDC which is essential to activate AdoMetDC. Required for the biosynthesis of the polyamine spermidine. Required for growth and survival during the bloodstream life cycle stage. This Trypanosoma brucei brucei protein is Inactive S-adenosylmethionine decarboxylase prozyme.